The following is a 663-amino-acid chain: UvrABC system protein B (663 aa).

The 241-residue stretch at D31–E271 folds into the Helicase ATP-binding domain. Position 44–51 (G44–T51) interacts with ATP. The Beta-hairpin signature appears at Y97–V120. The Helicase C-terminal domain maps to Q435–I601. The UVR domain maps to Q627 to I662.

The protein belongs to the UvrB family. As to quaternary structure, forms a heterotetramer with UvrA during the search for lesions. Interacts with UvrC in an incision complex.

Its subcellular location is the cytoplasm. The UvrABC repair system catalyzes the recognition and processing of DNA lesions. A damage recognition complex composed of 2 UvrA and 2 UvrB subunits scans DNA for abnormalities. Upon binding of the UvrA(2)B(2) complex to a putative damaged site, the DNA wraps around one UvrB monomer. DNA wrap is dependent on ATP binding by UvrB and probably causes local melting of the DNA helix, facilitating insertion of UvrB beta-hairpin between the DNA strands. Then UvrB probes one DNA strand for the presence of a lesion. If a lesion is found the UvrA subunits dissociate and the UvrB-DNA preincision complex is formed. This complex is subsequently bound by UvrC and the second UvrB is released. If no lesion is found, the DNA wraps around the other UvrB subunit that will check the other stand for damage. This chain is UvrABC system protein B, found in Streptococcus equi subsp. zooepidemicus (strain MGCS10565).